Here is a 433-residue protein sequence, read N- to C-terminus: Nuclear hormone receptor family member nhr-98 (433 aa).

The nuclear receptor DNA-binding region spans 41–116; sequence SKKCQICENP…FGMTIDNFQF (76 aa). 2 NR C4-type zinc fingers span residues 44–64 and 80–104; these read CQIC…CRAC and CKTE…MQRC. Residues 177–433 form the NR LBD domain; the sequence is ETPYQVSNVL…CSHPGIFLNA (257 aa).

The protein belongs to the nuclear hormone receptor family.

The protein localises to the nucleus. Functionally, orphan nuclear receptor. This is Nuclear hormone receptor family member nhr-98 (nhr-98) from Caenorhabditis elegans.